Consider the following 327-residue polypeptide: uncharacterized protein (327 aa).

Residues Ile13 to Lys33 form a helical membrane-spanning segment.

The protein resides in the membrane. This is an uncharacterized protein from Caenorhabditis elegans.